Here is a 276-residue protein sequence, read N- to C-terminus: 4-deoxy-L-threo-5-hexosulose-uronate ketol-isomerase 1 (276 aa).

H194, H196, E201, and H243 together coordinate Zn(2+).

Belongs to the KduI family. Zn(2+) is required as a cofactor.

The catalysed reaction is 5-dehydro-4-deoxy-D-glucuronate = 3-deoxy-D-glycero-2,5-hexodiulosonate. The protein operates within glycan metabolism; pectin degradation; 2-dehydro-3-deoxy-D-gluconate from pectin: step 4/5. Its function is as follows. Catalyzes the isomerization of 5-dehydro-4-deoxy-D-glucuronate to 3-deoxy-D-glycero-2,5-hexodiulosonate. This is 4-deoxy-L-threo-5-hexosulose-uronate ketol-isomerase 1 (kduI1) from Enterococcus faecalis (strain ATCC 700802 / V583).